Here is a 432-residue protein sequence, read N- to C-terminus: Non-peptidase homolog YmxG (432 aa).

Positions M1–A20 are cleaved as a signal peptide.

Belongs to the peptidase M16 family.

It is found in the secreted. May contribute to the full activity of the protease PqqE. The chain is Non-peptidase homolog YmxG from Helicobacter pylori (strain ATCC 700392 / 26695) (Campylobacter pylori).